The chain runs to 833 residues: F1 capsule-anchoring protein (833 aa).

Residues 1 to 25 (MRYSKLFLCAGLTLATLPCWGRAYT) form the signal peptide. Cys-807 and Cys-829 are joined by a disulfide.

The protein belongs to the fimbrial export usher family.

The protein resides in the cell outer membrane. A probable role in capsular biogenesis. It is likely that the caf1A molecule binds F1 antigen subunits during the extracellular secretion process. The sequence is that of F1 capsule-anchoring protein (caf1A) from Yersinia pestis.